Reading from the N-terminus, the 655-residue chain is Cyclomaltodextrin glucanotransferase (655 aa).

The first 30 residues, 1–30 (MKRNRFFNTSAAIAISIALNTFFCSMQTIA), serve as a signal peptide directing secretion. 5 residues coordinate Ca(2+): Asp-55, Asn-60, Asn-61, Gly-79, and Asp-81. 123–124 (YW) lines the substrate pocket. Asn-164 provides a ligand contact to Ca(2+). Substrate-binding positions include His-165 and 217–220 (NLFN). Asp-223 is a binding site for Ca(2+). Residue Arg-251 participates in substrate binding. Asp-253 acts as the Nucleophile in catalysis. Residue 256–257 (KH) coordinates substrate. His-257 provides a ligand contact to Ca(2+). Glu-287 acts as the Proton donor in catalysis. Residues His-362, Asp-436, and Arg-440 each contribute to the substrate site. In terms of domain architecture, CBM20 spans 554-655 (AENPTVQSIN…NDTQTTNGSF (102 aa)). The segment at 630–655 (TANVEWQSGANNQFNSNDTQTTNGSF) is disordered.

This sequence belongs to the glycosyl hydrolase 13 family. In terms of assembly, monomer. The cofactor is Ca(2+).

The enzyme catalyses Cyclizes part of a (1-&gt;4)-alpha-D-glucan chain by formation of a (1-&gt;4)-alpha-D-glucosidic bond.. This chain is Cyclomaltodextrin glucanotransferase (cgt), found in Klebsiella oxytoca.